A 565-amino-acid polypeptide reads, in one-letter code: Probable peptidoglycan D,D-transpeptidase PbpC (565 aa).

A helical membrane pass occupies residues Phe10–Tyr30. The active-site Acyl-ester intermediate is the Ser289.

This sequence belongs to the transpeptidase family. FtsI subfamily.

The protein resides in the cell inner membrane. It carries out the reaction Preferential cleavage: (Ac)2-L-Lys-D-Ala-|-D-Ala. Also transpeptidation of peptidyl-alanyl moieties that are N-acyl substituents of D-alanine.. It participates in cell wall biogenesis; peptidoglycan biosynthesis. Its function is as follows. Catalyzes cross-linking of the peptidoglycan cell wall at the division septum. Binds penicillin. The sequence is that of Probable peptidoglycan D,D-transpeptidase PbpC from Pseudomonas aeruginosa (strain ATCC 15692 / DSM 22644 / CIP 104116 / JCM 14847 / LMG 12228 / 1C / PRS 101 / PAO1).